The chain runs to 85 residues: Large ribosomal subunit protein bL27 (85 aa).

The segment at 1–22 is disordered; the sequence is MAHKKGQGSSRNGRDSPGQRRG.

The protein belongs to the bacterial ribosomal protein bL27 family.

The sequence is that of Large ribosomal subunit protein bL27 from Anaeromyxobacter dehalogenans (strain 2CP-1 / ATCC BAA-258).